We begin with the raw amino-acid sequence, 445 residues long: Phosphoglucosamine mutase (445 aa).

The active-site Phosphoserine intermediate is S102. 4 residues coordinate Mg(2+): S102, D240, D242, and D244. Phosphoserine is present on S102.

It belongs to the phosphohexose mutase family. It depends on Mg(2+) as a cofactor. Post-translationally, activated by phosphorylation.

It carries out the reaction alpha-D-glucosamine 1-phosphate = D-glucosamine 6-phosphate. In terms of biological role, catalyzes the conversion of glucosamine-6-phosphate to glucosamine-1-phosphate. This chain is Phosphoglucosamine mutase, found in Mycolicibacterium gilvum (strain PYR-GCK) (Mycobacterium gilvum (strain PYR-GCK)).